The chain runs to 426 residues: Synaptotagmin-13 (426 aa).

The Vesicular segment spans residues 1-6 (MVLSVP). A helical transmembrane segment spans residues 7-29 (VIALGATLGTATSILALCGVTCL). Over 30–426 (CRHMHPKKGL…QIAMWHQLHL (397 aa)) the chain is Cytoplasmic. C2 domains are found at residues 158 to 275 (QAPK…AQWG) and 287 to 422 (GAGE…AMWH).

This sequence belongs to the synaptotagmin family. Interacts with NRXN1. In terms of tissue distribution, expressed in brain, heart, spleen, lung and testis.

It localises to the cytoplasmic vesicle membrane. May be involved in transport vesicle docking to the plasma membrane. This chain is Synaptotagmin-13 (Syt13), found in Mus musculus (Mouse).